Consider the following 120-residue polypeptide: Small ribosomal subunit protein uS13 (120 aa).

A disordered region spans residues 94-120; that stretch reads GLPLRGQRTRTNARTRKGPRKAIAGKK.

This sequence belongs to the universal ribosomal protein uS13 family. Part of the 30S ribosomal subunit. Forms a loose heterodimer with protein S19. Forms two bridges to the 50S subunit in the 70S ribosome.

Located at the top of the head of the 30S subunit, it contacts several helices of the 16S rRNA. In the 70S ribosome it contacts the 23S rRNA (bridge B1a) and protein L5 of the 50S subunit (bridge B1b), connecting the 2 subunits; these bridges are implicated in subunit movement. Contacts the tRNAs in the A and P-sites. This chain is Small ribosomal subunit protein uS13, found in Azoarcus sp. (strain BH72).